The following is a 341-amino-acid chain: Outer membrane protein U (341 aa).

The first 21 residues, 1–21, serve as a signal peptide directing secretion; that stretch reads MNKTLIALAVSAAAVATGAYA.

Belongs to the Gram-negative porin family. Homotrimer.

It localises to the cell outer membrane. Functionally, forms pores that allow passive diffusion of small molecules across the outer membrane. The sequence is that of Outer membrane protein U (ompU) from Vibrio cholerae serotype O1 (strain ATCC 39315 / El Tor Inaba N16961).